Here is a 358-residue protein sequence, read N- to C-terminus: Trace amine-associated receptor 7e (358 aa).

The Extracellular portion of the chain corresponds to 1–47 (MATDDASFPWDQDSILSRDLLSALSSQLCYENLNRSCIRSPYSPGPR). A glycan (N-linked (GlcNAc...) asparagine) is linked at Asn-34. Disulfide bonds link Cys-37/Cys-201 and Cys-120/Cys-205. A helical transmembrane segment spans residues 48 to 68 (LILHAVFGFSAVLAVCGNLLV). The Cytoplasmic portion of the chain corresponds to 69 to 83 (MTSILHFRQLHSPAN). A helical membrane pass occupies residues 84–104 (FLVASLACADLLVGLTVMPFS). Residues 105-121 (MVRSVEGCWYFGDIYCK) lie on the Extracellular side of the membrane. Residues 122–143 (FHSSFDVSFCYSSIFHLCFISV) traverse the membrane as a helical segment. The Cytoplasmic portion of the chain corresponds to 144 to 166 (DRYIAVSDPLIYLTRFTASVSGK). A helical transmembrane segment spans residues 167 to 187 (CITFSWFLSIIYSFSLLYTGA). Residues 188 to 212 (SEAGLEDLVSALTCVGGCQLAVNQS) lie on the Extracellular side of the membrane. N-linked (GlcNAc...) asparagine glycosylation is present at Asn-210. The chain crosses the membrane as a helical span at residues 213–233 (WVFINFLLFLVPTLVMMTVYS). Residues 234–274 (KVFLIAKQQAQNIEKIGKQTARASESYKDRVAKRERKAAKT) lie on the Cytoplasmic side of the membrane. Residues 275–295 (LGITVAAFLLSWLPYFIDSII) form a helical membrane-spanning segment. At 296 to 309 (DAFLGFITPTYVYE) the chain is on the extracellular side. Residues 310–333 (ILVWIAYYNSAMNPLIYAFFYPWF) form a helical membrane-spanning segment. The Cytoplasmic portion of the chain corresponds to 334–358 (RKAIKLIVTGKILRENSSATNLFPE).

It belongs to the G-protein coupled receptor 1 family.

It localises to the cell membrane. Olfactory receptor specific for N,N-dimethylalkylamines trace amines. Trace amine compounds are enriched in animal body fluids and act on trace amine-associated receptors (TAARs) to elicit both intraspecific and interspecific innate behaviors. Ligand-binding causes a conformation change that triggers signaling via G(s)-class of G alpha proteins (GNAL or GNAS). The chain is Trace amine-associated receptor 7e from Rattus norvegicus (Rat).